A 395-amino-acid polypeptide reads, in one-letter code: Syncephapepsin (395 aa).

The signal sequence occupies residues 1–19; that stretch reads MKFSLALLATVALATISQA. Positions 20 to 71 are cleaved as a propeptide — activation peptide; it reads APVEKQVAGKPFQLVKNPHYQANATRAIFRAEKKYARHTAIPEQGKTIVKSA. In terms of domain architecture, Peptidase A1 spans 89-391; it reads YYATVSVGTP…NQGVPEVQIA (303 aa). Residue aspartate 107 is part of the active site. A disulfide bridge connects residues cysteine 120 and cysteine 123. Aspartate 288 is a catalytic residue. The cysteines at positions 322 and 355 are disulfide-linked.

The protein belongs to the peptidase A1 family. As to quaternary structure, monomer.

Functionally, hydrolysis of proteins with a broad specificity. Residues recognized to be cleaved were primarily those of trypsin and chymotrypsin and Lys was the most susceptible. The protein is Syncephapepsin (SPSR) of Syncephalastrum racemosum (Filamentous fungus).